The sequence spans 128 residues: MARKKTTKRKVKKNVPLGIAHIHTTFNNTIVTITDLNGNAVTWSSAGALGFKGSRKSTPFAAQLAAEAVAKAAMEHGMVKVETFITGPGPGREAAIRSLQAAGLEITAIKDVTAVPHNGCRPPKPPRG.

Belongs to the universal ribosomal protein uS11 family. As to quaternary structure, part of the 30S ribosomal subunit. Interacts with proteins S7 and S18. Binds to IF-3.

Functionally, located on the platform of the 30S subunit, it bridges several disparate RNA helices of the 16S rRNA. Forms part of the Shine-Dalgarno cleft in the 70S ribosome. The protein is Small ribosomal subunit protein uS11 of Onion yellows phytoplasma (strain OY-M).